Here is a 427-residue protein sequence, read N- to C-terminus: Glutamate-1-semialdehyde 2,1-aminomutase (427 aa).

The residue at position 265 (Lys-265) is an N6-(pyridoxal phosphate)lysine.

Belongs to the class-III pyridoxal-phosphate-dependent aminotransferase family. HemL subfamily. In terms of assembly, homodimer. It depends on pyridoxal 5'-phosphate as a cofactor.

It localises to the cytoplasm. The catalysed reaction is (S)-4-amino-5-oxopentanoate = 5-aminolevulinate. It functions in the pathway porphyrin-containing compound metabolism; protoporphyrin-IX biosynthesis; 5-aminolevulinate from L-glutamyl-tRNA(Glu): step 2/2. This chain is Glutamate-1-semialdehyde 2,1-aminomutase, found in Burkholderia lata (strain ATCC 17760 / DSM 23089 / LMG 22485 / NCIMB 9086 / R18194 / 383).